Here is a 477-residue protein sequence, read N- to C-terminus: NADH-quinone oxidoreductase subunit N (477 aa).

The next 13 helical transmembrane spans lie at 7 to 27 (VLAHALPELILAGGVLLLILI), 37 to 57 (GPMTELAVGLLGIAILTLVLG), 77 to 97 (FMKVLVLIGSLVSLIMGQTYL), 109 to 129 (ILILLSTLGMLMLISATGLIA), 162 to 182 (FVLGALSSGMLLYGASLIYGF), 201 to 221 (LGVVFGLVFLTAGLAFKMSTV), 233 to 253 (GAPTPVTAFFASAPKLAAIAI), 272 to 292 (IIVFISILSMALGSFAAIGQT), 297 to 317 (LMAYSSIGHMGFALVGLAAGT), 323 to 343 (GVLAYMAIYLVMTLGTFAAIL), 369 to 389 (AFFLAIMMFSLAGIPPLAGFF), 402 to 424 (HLYPLAVIGVLCSTVGAYYYLRI), and 446 to 466 (AVLIVTGLAVLLLCVYPGSFV).

Belongs to the complex I subunit 2 family. In terms of assembly, NDH-1 is composed of 14 different subunits. Subunits NuoA, H, J, K, L, M, N constitute the membrane sector of the complex.

It localises to the cell inner membrane. It carries out the reaction a quinone + NADH + 5 H(+)(in) = a quinol + NAD(+) + 4 H(+)(out). Functionally, NDH-1 shuttles electrons from NADH, via FMN and iron-sulfur (Fe-S) centers, to quinones in the respiratory chain. The immediate electron acceptor for the enzyme in this species is believed to be ubiquinone. Couples the redox reaction to proton translocation (for every two electrons transferred, four hydrogen ions are translocated across the cytoplasmic membrane), and thus conserves the redox energy in a proton gradient. The protein is NADH-quinone oxidoreductase subunit N of Beijerinckia indica subsp. indica (strain ATCC 9039 / DSM 1715 / NCIMB 8712).